The chain runs to 445 residues: UDP-N-acetylmuramoylalanine--D-glutamate ligase (445 aa).

110–116 (GSNGKTT) contributes to the ATP binding site.

It belongs to the MurCDEF family.

It localises to the cytoplasm. It catalyses the reaction UDP-N-acetyl-alpha-D-muramoyl-L-alanine + D-glutamate + ATP = UDP-N-acetyl-alpha-D-muramoyl-L-alanyl-D-glutamate + ADP + phosphate + H(+). It functions in the pathway cell wall biogenesis; peptidoglycan biosynthesis. Functionally, cell wall formation. Catalyzes the addition of glutamate to the nucleotide precursor UDP-N-acetylmuramoyl-L-alanine (UMA). The chain is UDP-N-acetylmuramoylalanine--D-glutamate ligase from Christiangramia forsetii (strain DSM 17595 / CGMCC 1.15422 / KT0803) (Gramella forsetii).